Consider the following 448-residue polypeptide: Glucose-6-phosphate isomerase (448 aa).

The active-site Proton donor is Glu-288. Residues His-309 and Lys-423 contribute to the active site.

The protein belongs to the GPI family.

It is found in the cytoplasm. The enzyme catalyses alpha-D-glucose 6-phosphate = beta-D-fructose 6-phosphate. The protein operates within carbohydrate biosynthesis; gluconeogenesis. It functions in the pathway carbohydrate degradation; glycolysis; D-glyceraldehyde 3-phosphate and glycerone phosphate from D-glucose: step 2/4. Its function is as follows. Catalyzes the reversible isomerization of glucose-6-phosphate to fructose-6-phosphate. The chain is Glucose-6-phosphate isomerase from Fusobacterium nucleatum subsp. nucleatum (strain ATCC 25586 / DSM 15643 / BCRC 10681 / CIP 101130 / JCM 8532 / KCTC 2640 / LMG 13131 / VPI 4355).